The primary structure comprises 428 residues: MKLITNKQGLVGEITVPGDKSMSHRSIMFGAIAEGKTVIRHFLRADDCLGTIKAFKALGVKIEETDEEIIVHGTGSDGLKQAEGPLDIGNSGTTIRLMMGILAGRDFDTVILGDESIAKRPMNRVMLPLQEMGAKMHGKDGSEFAPISIIGNQSLKRMEYHMPVASAQVKSAIIFAALQAEGETIIHEKEKTRDHTEHMIRQFGGEIEMDGLTIRVKGGQKFIGQEMTVPGDVSSAAFFIVAGLITPGSEIELTHVGLNPTRTGIFDVVEQMGGSLVVKDSSRSTGKLAGTVVVKSSELKGTEIGGDIIPRLIDEIPVIALLATQAEGTTIIKDAAELKVKETNRIDAVANELNKMGADITPTEDGLIIRGKTPLHAANVTSYGDHRIGMMLQIAALLVEDGDVELDRAEAVSVSYPTFFEDIRSLLK.

Residues lysine 20, serine 21, and arginine 25 each coordinate 3-phosphoshikimate. Residue lysine 20 participates in phosphoenolpyruvate binding. Glycine 92 and arginine 120 together coordinate phosphoenolpyruvate. The 3-phosphoshikimate site is built by serine 166, glutamine 168, aspartate 314, and lysine 341. Phosphoenolpyruvate is bound at residue glutamine 168. The active-site Proton acceptor is aspartate 314. 2 residues coordinate phosphoenolpyruvate: arginine 345 and arginine 387.

It belongs to the EPSP synthase family. In terms of assembly, monomer.

Its subcellular location is the cytoplasm. It carries out the reaction 3-phosphoshikimate + phosphoenolpyruvate = 5-O-(1-carboxyvinyl)-3-phosphoshikimate + phosphate. Its pathway is metabolic intermediate biosynthesis; chorismate biosynthesis; chorismate from D-erythrose 4-phosphate and phosphoenolpyruvate: step 6/7. Catalyzes the transfer of the enolpyruvyl moiety of phosphoenolpyruvate (PEP) to the 5-hydroxyl of shikimate-3-phosphate (S3P) to produce enolpyruvyl shikimate-3-phosphate and inorganic phosphate. The polypeptide is 3-phosphoshikimate 1-carboxyvinyltransferase (Listeria innocua serovar 6a (strain ATCC BAA-680 / CLIP 11262)).